The sequence spans 574 residues: Streptolysin O (574 aa).

Residues 1–36 (MKDMSNKKIFKKYSRVAGLLTAALIVGNLVTANADS) form the signal peptide. The span at 37-52 (NKQNTANTETTTTNEQ) shows a compositional bias: low complexity. Disordered regions lie at residues 37–64 (NKQN…TTEK) and 84–111 (KEMP…HTEE). Positions 53–64 (PKPESSELTTEK) are enriched in basic and acidic residues. Beta stranded transmembrane passes span 263–276 (KSQI…NSKI), 283–292 (IDFKSISKGE), 361–370 (SNDVEAAFSA), and 378–390 (KTNG…LENS). Positions 532-542 (ECTGLAWEWWR) match the Conserved undecapeptide motif. The short motif at 564–565 (TL) is the Cholesterol binding element.

It belongs to the cholesterol-dependent cytolysin family. Homooligomeric pore complex of 35 to 50 subunits; when inserted in the host membrane.

It is found in the secreted. Its subcellular location is the host cell membrane. A cholesterol-dependent toxin that causes cytolysis by forming pores in cholesterol containing host membranes. After binding to target membranes, the protein undergoes a major conformation change, leading to its insertion in the host membrane and formation of an oligomeric pore complex. Cholesterol is required for binding to host membranes, membrane insertion and pore formation; cholesterol binding is mediated by a Thr-Leu pair in the C-terminus. Can be reversibly inactivated by oxidation. This is Streptolysin O (slo) from Streptococcus canis.